The sequence spans 109 residues: SRA stem-loop-interacting RNA-binding protein, mitochondrial (109 aa).

At S15 the chain carries Phosphoserine. Residues 19 to 103 (PVAFVRRIPW…RRPKLPQTSD (85 aa)) enclose the RRM domain. T101 is modified (phosphothreonine). S102 is subject to Phosphoserine.

It is found in the mitochondrion. The protein localises to the nucleus. In terms of biological role, RNA-binding protein that acts as a nuclear receptor corepressor. Probably acts by binding the SRA RNA, and repressing the SRA-mediated nuclear receptor coactivation. Binds the STR7 loop of SRA RNA. Also able to repress glucocorticoid (GR), androgen (AR), thyroid (TR) and VDR-mediated transactivation. The chain is SRA stem-loop-interacting RNA-binding protein, mitochondrial (SLIRP) from Pongo abelii (Sumatran orangutan).